The following is a 274-amino-acid chain: Large ribosomal subunit protein uL2cz/uL2cy (274 aa).

Disordered regions lie at residues 1–22 and 224–274; these read MAIN…DSQV and NPVD…RRSK.

The protein belongs to the universal ribosomal protein uL2 family. In terms of assembly, part of the 50S ribosomal subunit.

It is found in the plastid. Its subcellular location is the chloroplast. The sequence is that of Large ribosomal subunit protein uL2cz/uL2cy (rpl2-A) from Helianthus annuus (Common sunflower).